The chain runs to 292 residues: Tetratricopeptide repeat protein 1 (292 aa).

The interval Thr23–Glu125 is disordered. Basic and acidic residues-rich tracts occupy residues Leu45 to Glu55 and Gly75 to Glu85. 2 positions are modified to phosphoserine: Ser83 and Ser90. The span at Glu99–Glu125 shows a compositional bias: basic and acidic residues. TPR repeat units follow at residues Ser116–Cys149, Ser155–Tyr188, and Ile189–Ile222.

As to quaternary structure, interacts with the GAP domain of NF1. Interacts (via TPR repeats) with HSP90AA1 and HSPA8.

The protein is Tetratricopeptide repeat protein 1 (TTC1) of Homo sapiens (Human).